A 142-amino-acid chain; its full sequence is Large ribosomal subunit protein uL11 (142 aa).

The protein belongs to the universal ribosomal protein uL11 family. As to quaternary structure, part of the ribosomal stalk of the 50S ribosomal subunit. Interacts with L10 and the large rRNA to form the base of the stalk. L10 forms an elongated spine to which L12 dimers bind in a sequential fashion forming a multimeric L10(L12)X complex. Post-translationally, one or more lysine residues are methylated.

In terms of biological role, forms part of the ribosomal stalk which helps the ribosome interact with GTP-bound translation factors. This is Large ribosomal subunit protein uL11 from Acidithiobacillus ferrooxidans (strain ATCC 23270 / DSM 14882 / CIP 104768 / NCIMB 8455) (Ferrobacillus ferrooxidans (strain ATCC 23270)).